A 161-amino-acid chain; its full sequence is Large-conductance mechanosensitive channel (161 aa).

Transmembrane regions (helical) follow at residues 21–41 (VGVIIGAAFNGIVKSLVDGVI) and 79–99 (GAFINTVIQFLIVAVVVFLLV). Positions 142-154 (TAAPKAAAAPVAK) are enriched in low complexity. The segment at 142–161 (TAAPKAAAAPVAKPKTKPKA) is disordered.

Belongs to the MscL family. Homopentamer.

The protein resides in the cell inner membrane. Its function is as follows. Channel that opens in response to stretch forces in the membrane lipid bilayer. May participate in the regulation of osmotic pressure changes within the cell. The protein is Large-conductance mechanosensitive channel of Caulobacter sp. (strain K31).